The following is a 250-amino-acid chain: Acidic endochitinase (250 aa).

The residue at position 1 (glutamine 1) is a Pyrrolidone carboxylic acid. Residues 1-36 enclose the Chitin-binding type-1 domain; sequence QNCQCDTTIYCCSQHGYCGNSYDYCGPGCQAGPCWD. Disulfide bonds link cysteine 3-cysteine 12, cysteine 5-cysteine 18, cysteine 11-cysteine 25, cysteine 29-cysteine 34, cysteine 66-cysteine 115, cysteine 128-cysteine 136, and cysteine 218-cysteine 250. Glutamate 110 functions as the Proton donor in the catalytic mechanism.

It belongs to the glycosyl hydrolase 19 family. Chitinase class I subfamily.

It carries out the reaction Random endo-hydrolysis of N-acetyl-beta-D-glucosaminide (1-&gt;4)-beta-linkages in chitin and chitodextrins.. Its function is as follows. Defense against chitin-containing fungal pathogens. This chain is Acidic endochitinase, found in Dioscorea japonica (Japanese yam).